A 196-amino-acid polypeptide reads, in one-letter code: Proteasome subunit beta 2 (196 aa).

A propeptide spans 1–6 (removed in mature form; by autocatalysis); the sequence is MEELPS. The active-site Nucleophile is Thr-7.

Belongs to the peptidase T1B family. In terms of assembly, the 20S proteasome core is composed of 14 alpha and 14 beta subunits that assemble into four stacked heptameric rings, resulting in a barrel-shaped structure. The two inner rings, each composed of seven catalytic beta subunits, are sandwiched by two outer rings, each composed of seven alpha subunits. The catalytic chamber with the active sites is on the inside of the barrel. Has a gated structure, the ends of the cylinder being occluded by the N-termini of the alpha-subunits. Is capped at one or both ends by the proteasome regulatory ATPase, PAN.

It localises to the cytoplasm. It carries out the reaction Cleavage of peptide bonds with very broad specificity.. Its activity is regulated as follows. The formation of the proteasomal ATPase PAN-20S proteasome complex, via the docking of the C-termini of PAN into the intersubunit pockets in the alpha-rings, triggers opening of the gate for substrate entry. Interconversion between the open-gate and close-gate conformations leads to a dynamic regulation of the 20S proteasome proteolysis activity. Functionally, component of the proteasome core, a large protease complex with broad specificity involved in protein degradation. In Metallosphaera sedula (strain ATCC 51363 / DSM 5348 / JCM 9185 / NBRC 15509 / TH2), this protein is Proteasome subunit beta 2.